A 498-amino-acid chain; its full sequence is ATP synthase subunit beta, chloroplastic (498 aa).

Residue 172-179 (GGAGVGKT) coordinates ATP.

Belongs to the ATPase alpha/beta chains family. F-type ATPases have 2 components, CF(1) - the catalytic core - and CF(0) - the membrane proton channel. CF(1) has five subunits: alpha(3), beta(3), gamma(1), delta(1), epsilon(1). CF(0) has four main subunits: a(1), b(1), b'(1) and c(9-12).

It localises to the plastid. The protein localises to the chloroplast thylakoid membrane. The catalysed reaction is ATP + H2O + 4 H(+)(in) = ADP + phosphate + 5 H(+)(out). Produces ATP from ADP in the presence of a proton gradient across the membrane. The catalytic sites are hosted primarily by the beta subunits. This chain is ATP synthase subunit beta, chloroplastic, found in Salacca zalacca (Snake palm).